The primary structure comprises 111 residues: Large ribosomal subunit protein uL22 (111 aa).

This sequence belongs to the universal ribosomal protein uL22 family. In terms of assembly, part of the 50S ribosomal subunit.

In terms of biological role, this protein binds specifically to 23S rRNA; its binding is stimulated by other ribosomal proteins, e.g. L4, L17, and L20. It is important during the early stages of 50S assembly. It makes multiple contacts with different domains of the 23S rRNA in the assembled 50S subunit and ribosome. The globular domain of the protein is located near the polypeptide exit tunnel on the outside of the subunit, while an extended beta-hairpin is found that lines the wall of the exit tunnel in the center of the 70S ribosome. This chain is Large ribosomal subunit protein uL22, found in Citrifermentans bemidjiense (strain ATCC BAA-1014 / DSM 16622 / JCM 12645 / Bem) (Geobacter bemidjiensis).